A 421-amino-acid chain; its full sequence is MEKMHITNQEHDAFVKSNPNGDLLQLTKWAETKKLTGWYARRIAVGRDGEIQGVAQLLFKKVPKLPYTLCYISRGFVVDYSNKEALNALLDSAKEIAKAEKAYAIKIDPDVEVDKGTDALQNLKALGFKHKGFKEGLSKDYIQPRMTMITPIDKNDDELLNSFERRNRSKVRLALKRGTTVERSDREGLKTFAELMKITGERDGFLTRDISYFENIYDALHEDGDAELFLVKLDPKENIAKVNQELNELHAEIAKWQQKMETSEKQAKKAQNMINDAQNKIAKNEDLKRDLEALEKEHPEGIYLSGALLMFAGSKSYYLYGASSNEFRDFLPNHHMQYTMMKYAREHGATTYDFGGTDNDPDKDSEHYGLWAFKKVWGTYLSEKIGEFDYVLNQPLYQLIEQVKPRLTKAKIKISRKLKRK.

This sequence belongs to the FemABX family. In terms of assembly, monomer.

It localises to the cytoplasm. It carries out the reaction beta-D-GlcNAc-(1-&gt;4)-Mur2Ac(oyl-L-Ala-D-isoglutaminyl-L-Lys-D-Ala-D-Ala)-di-trans,octa-cis-undecaprenyl diphosphate + glycyl-tRNA(Gly) = beta-D-GlcNAc-(1-&gt;4)-Mur2Ac(oyl-L-Ala-D-isoglutaminyl-L-Lys-(N(6)-Gly)-D-Ala-D-Ala)-di-trans,octa-cis-undecaprenyl diphosphate + tRNA(Gly) + H(+). Its function is as follows. Catalyzes the incorporation of the first glycine of the pentaglycine interpeptide bridge, which is characteristic of the S.aureus peptidoglycan. This glycine is added to the epsilon-amino group of the L-lysine of the membrane-bound lipid II intermediate (GlcNAc-(beta-1,4)-N-acetylmuramic acid(-L-Ala-D-iGln-L-Lys-D-Ala-D-Ala)-pyrophosphoryl-undecaprenol), using glycyl-tRNA(Gly) as donor, in a ribosome-independent mechanism. Involved in methicillin resistance. The protein is Lipid II:glycine glycyltransferase (femX) of Staphylococcus aureus (strain MRSA252).